Consider the following 961-residue polypeptide: Thrombospondin-4 (961 aa).

The first 23 residues, 1 to 23 (MLAPRGATFLLLHLALQPWLGAG), serve as a signal peptide directing secretion. The region spanning 24–192 (AQATPQVFDL…LEELKLVVRG (169 aa)) is the Laminin G-like domain. The 40-residue stretch at 286–325 (PVRRCDSNPCFRGVRCTDTRDGFQCGPCPEGYTGNGIVCS) folds into the EGF-like 1 domain. 21 cysteine pairs are disulfide-bonded: C290–C301, C295–C310, C313–C324, C330–C341, C335–C350, C353–C377, C383–C394, C388–C403, C406–C418, C424–C438, C432–C448, C450–C461, C477–C482, C487–C507, C523–C543, C546–C566, C582–C602, C605–C625, C643–C663, C683–C703, and C719–C940. The EGF-like 2; calcium-binding domain occupies 326 to 363 (DVDECRYHPCYPGVRCVNLAPGFRCDACPVGFTGPMMQ). The EGF-like 3; calcium-binding domain maps to 379–419 (DIDECRNGACVLNSICINTLGSYRCGPCKPGYIGDQMRGCK). An EGF-like 4 domain is found at 420–462 (MERNCRDPELNPCSVNAQCIEERQGDVTCVCGVGWAGDGYICG). TSP type-3 repeat units follow at residues 463-495 (KDVDIDSYPDEELPCSARNCKKDNCKYVPNSGQ), 496-531 (EDADRDGIGDACDDDADGDGILNEQDNCVLTHNVDQ), 532-554 (RNSDKDIFGDACDNCRNVLNNDQ), 555-590 (KDTDGDGKGDACDDDMDGDGIKNILDNCQKVPNSDQ), 591-613 (EDRDGDGVGDACDSCPEVSNPNQ), 614-651 (SDVDNDLVGDSCDTNQDSDGDGHQDSTDNCPTVINSAQ), 652-691 (LDTDKDGIGDECDDDDDNDGIPDLVPPGPDNCRLVPNPAQ), and 692-727 (EDSNSDGVGDICEADFDQDQVIDRIDVCPENAEVTL). Residues 562-564 (KGD) carry the Cell attachment site motif. The disordered stretch occupies residues 581-671 (NCQKVPNSDQ…ECDDDDDNDG (91 aa)). Residue N612 is glycosylated (N-linked (GlcNAc...) asparagine). Over residues 640-652 (TDNCPTVINSAQL) the composition is skewed to polar residues. The span at 660-671 (GDECDDDDDNDG) shows a compositional bias: acidic residues. Residues 731 to 945 (RAYQTVVLDP…LKYRCNDTIP (215 aa)) enclose the TSP C-terminal domain. A glycan (N-linked (GlcNAc...) asparagine) is linked at N941.

Belongs to the thrombospondin family. Homopentamer; disulfide-linked. Interacts with PTBP3. Interacts (via EGF-like 3; calcium-binding domain) with ATF6 and facilitates its processing, activation and nuclear translocation. Interacts with NOTCH1.

Its subcellular location is the endoplasmic reticulum. The protein resides in the sarcoplasmic reticulum. The protein localises to the secreted. It localises to the extracellular space. It is found in the extracellular matrix. In terms of biological role, adhesive glycoprotein that mediates cell-to-cell and cell-to-matrix interactions and is involved in various processes including cellular proliferation, migration, adhesion and attachment, inflammatory response to CNS injury, regulation of vascular inflammation and adaptive responses of the heart to pressure overload and in myocardial function and remodeling. Binds to structural extracellular matrix (ECM) proteins and modulates the ECM in response to tissue damage, contributing to cardioprotective and adaptive ECM remodeling. Plays a role in ER stress response, via its interaction with the activating transcription factor 6 alpha (ATF6) which produces adaptive ER stress response factors and protects myocardium from pressure overload. May contribute to spinal presynaptic hypersensitivity and neuropathic pain states after peripheral nerve injury. May play a role in regulating protective astrogenesis from the subventricular zone (SVZ) niche after injury in a NOTCH1-dependent manner. This chain is Thrombospondin-4 (THBS4), found in Bos taurus (Bovine).